Consider the following 503-residue polypeptide: NAD-dependent protein deacetylase HST1 (503 aa).

One can recognise a Deacetylase sirtuin-type domain in the interval 183-468 (RLPNFNTIDH…SLVAKKCHWD (286 aa)). NAD(+) is bound by residues 208-227 (GAGV…EGFY) and 290-293 (QNID). Histidine 310 functions as the Proton acceptor in the catalytic mechanism. Positions 318, 321, 342, and 345 each coordinate Zn(2+). NAD(+) is bound by residues 412–414 (GTS), 437–439 (NRD), and cysteine 454.

The protein belongs to the sirtuin family. Class I subfamily. In terms of assembly, identified in the Set3C complex with HOS2, SIF2, SNT1, CPR1, HOS4/YIL112W and SET3. Its presence is however not essential for meiotic repression by the Set3C complex. Interacts with SUM1 and RFM1. The interaction with SUM1 is mediated by RFM1. Zn(2+) is required as a cofactor.

Its subcellular location is the nucleus. The catalysed reaction is N(6)-acetyl-L-lysyl-[protein] + NAD(+) + H2O = 2''-O-acetyl-ADP-D-ribose + nicotinamide + L-lysyl-[protein]. Functionally, NAD-dependent histone deacetylase involved in telomeric silencing. Histone deacetylase proteins act via the formation of large multiprotein complexes that are responsible for the deacetylation of lysine residues on the N-terminal part of the core histones (H2A, H2B, H3 and H4). Histone deacetylation gives a tag for epigenetic repression and plays an important role in transcriptional regulation, cell cycle progression and developmental events. Restores silencing at HMR in SIR2 mutants when overexpressed. Required to repress middle sporulation genes during vegetative growth. Acts as a sensor of NAD(+) levels and regulator of NAD(+) biosynthesis. Regulates the gene expression of de novo NAD(+) biosynthesis genes. This Saccharomyces cerevisiae (strain ATCC 204508 / S288c) (Baker's yeast) protein is NAD-dependent protein deacetylase HST1 (HST1).